We begin with the raw amino-acid sequence, 76 residues long: Large ribosomal subunit protein uL29 (76 aa).

Belongs to the universal ribosomal protein uL29 family.

The polypeptide is Large ribosomal subunit protein uL29 (Corynebacterium glutamicum (strain R)).